A 164-amino-acid chain; its full sequence is Cyclic pyranopterin monophosphate synthase (164 aa).

Residues 75-77 (MAH) and 112-113 (ME) contribute to the substrate site. D127 is a catalytic residue.

The protein belongs to the MoaC family. In terms of assembly, homohexamer; trimer of dimers.

The catalysed reaction is (8S)-3',8-cyclo-7,8-dihydroguanosine 5'-triphosphate = cyclic pyranopterin phosphate + diphosphate. It participates in cofactor biosynthesis; molybdopterin biosynthesis. Its function is as follows. Catalyzes the conversion of (8S)-3',8-cyclo-7,8-dihydroguanosine 5'-triphosphate to cyclic pyranopterin monophosphate (cPMP). This Desulforamulus reducens (strain ATCC BAA-1160 / DSM 100696 / MI-1) (Desulfotomaculum reducens) protein is Cyclic pyranopterin monophosphate synthase.